A 257-amino-acid chain; its full sequence is Phosphate import ATP-binding protein PstB (257 aa).

Positions 11–252 (IQVRDLNFYY…PAKKQTEDYI (242 aa)) constitute an ABC transporter domain. 43 to 50 (GPSGCGKS) is an ATP binding site.

This sequence belongs to the ABC transporter superfamily. Phosphate importer (TC 3.A.1.7) family. The complex is composed of two ATP-binding proteins (PstB), two transmembrane proteins (PstC and PstA) and a solute-binding protein (PstS).

The protein resides in the cell inner membrane. It carries out the reaction phosphate(out) + ATP + H2O = ADP + 2 phosphate(in) + H(+). Part of the ABC transporter complex PstSACB involved in phosphate import. Responsible for energy coupling to the transport system. In Salmonella paratyphi A (strain ATCC 9150 / SARB42), this protein is Phosphate import ATP-binding protein PstB.